Consider the following 50-residue polypeptide: Large ribosomal subunit protein eL40 (50 aa).

Belongs to the eukaryotic ribosomal protein eL40 family.

This is Large ribosomal subunit protein eL40 from Aeropyrum pernix (strain ATCC 700893 / DSM 11879 / JCM 9820 / NBRC 100138 / K1).